The primary structure comprises 116 residues: Large ribosomal subunit protein bL20 (116 aa).

This sequence belongs to the bacterial ribosomal protein bL20 family.

In terms of biological role, binds directly to 23S ribosomal RNA and is necessary for the in vitro assembly process of the 50S ribosomal subunit. It is not involved in the protein synthesizing functions of that subunit. This Bacteroides fragilis (strain ATCC 25285 / DSM 2151 / CCUG 4856 / JCM 11019 / LMG 10263 / NCTC 9343 / Onslow / VPI 2553 / EN-2) protein is Large ribosomal subunit protein bL20.